Here is a 105-residue protein sequence, read N- to C-terminus: MKNKIKIRLKSFDHHSLDQATKEIVSAVKRTFASINGPIPLPRKIERFTVNRSPHVHKKSREQFEIRKHKRLLVIDDPNPAVVDALSKVDLAAGVDVVIELESGE.

This sequence belongs to the universal ribosomal protein uS10 family. In terms of assembly, part of the 30S ribosomal subunit.

Involved in the binding of tRNA to the ribosomes. The sequence is that of Small ribosomal subunit protein uS10 from Rickettsia akari (strain Hartford).